A 463-amino-acid chain; its full sequence is Chromosomal replication initiator protein DnaA (463 aa).

The segment at 1–83 (MSTNQIILTD…LQLFQHYNNT (83 aa)) is domain I, interacts with DnaA modulators. The tract at residues 83–124 (TIKSIEIITKELPGTTQTVTELPTKTFADIGSSELNSENIFS) is domain II. Residues 125–343 (TLDVRFTFDN…GALNKVIAHS (219 aa)) are domain III, AAA+ region. ATP is bound by residues G171, G173, K174, and T175. The tract at residues 344 to 463 (NFTLKEITLE…INLLMKILQN (120 aa)) is domain IV, binds dsDNA.

Belongs to the DnaA family. As to quaternary structure, oligomerizes as a right-handed, spiral filament on DNA at oriC.

The protein resides in the cytoplasm. Its function is as follows. Plays an essential role in the initiation and regulation of chromosomal replication. ATP-DnaA binds to the origin of replication (oriC) to initiate formation of the DNA replication initiation complex once per cell cycle. Binds the DnaA box (a 9 base pair repeat at the origin) and separates the double-stranded (ds)DNA. Forms a right-handed helical filament on oriC DNA; dsDNA binds to the exterior of the filament while single-stranded (ss)DNA is stabiized in the filament's interior. The ATP-DnaA-oriC complex binds and stabilizes one strand of the AT-rich DNA unwinding element (DUE), permitting loading of DNA polymerase. After initiation quickly degrades to an ADP-DnaA complex that is not apt for DNA replication. Binds acidic phospholipids. The sequence is that of Chromosomal replication initiator protein DnaA from Rickettsia conorii (strain ATCC VR-613 / Malish 7).